We begin with the raw amino-acid sequence, 455 residues long: UPF0210 protein Teth514_2074 (455 aa).

The protein belongs to the UPF0210 family. As to quaternary structure, homodimer.

In Thermoanaerobacter sp. (strain X514), this protein is UPF0210 protein Teth514_2074.